The following is a 623-amino-acid chain: (-)-limonene synthase TPS1, chloroplastic (623 aa).

Residues 1–60 (MQCIAFHQFASSSSLPIWSSIDNRFTPKTSITSISKPKPKLKSKSNLKSRSRSSTCYPIQ) constitute a chloroplast transit peptide. The segment at 29-52 (TSITSISKPKPKLKSKSNLKSRSR) is disordered. Residues 37-51 (PKPKLKSKSNLKSRS) show a composition bias toward basic residues. Arginine 337, aspartate 374, aspartate 378, arginine 516, and aspartate 519 together coordinate (2E)-geranyl diphosphate. Residues aspartate 374 and aspartate 378 each coordinate Mg(2+). The DDXXD motif signature appears at 374 to 378 (DDMHD). Positions 519, 523, and 527 each coordinate Mg(2+).

This sequence belongs to the terpene synthase family. Tpsb subfamily. Mg(2+) serves as cofactor. The cofactor is Mn(2+). Requires K(+) as cofactor. In terms of tissue distribution, trichome.

Its subcellular location is the plastid. It is found in the chloroplast. It catalyses the reaction (2E)-geranyl diphosphate = (4S)-limonene + diphosphate. The catalysed reaction is (2E)-geranyl diphosphate = terpinolene + diphosphate. It carries out the reaction (2E)-geranyl diphosphate = (1R,5R)-alpha-pinene + diphosphate. The enzyme catalyses (2E)-geranyl diphosphate = (1R,5R)-beta-pinene + diphosphate. It catalyses the reaction (2E)-geranyl diphosphate = beta-myrcene + diphosphate. The catalysed reaction is (2E)-geranyl diphosphate = (4R)-limonene + diphosphate. The protein operates within secondary metabolite biosynthesis; terpenoid biosynthesis. It participates in terpene metabolism; (4S)-limonene biosynthesis; (4S)-limonene from geranyl diphosphate: step 1/1. Functionally, involved in monoterpene (C10) olefins biosynthesis, constituants of cannabinoids and terpenoids-rich resins. Catalyzes mainly the conversion of (2E)-geranyl diphosphate to (-)-limonene, and also produces minor products such as (+)-limonene, (+)-alpha-pinene, terpinolene, (+)-beta-pinene and beta-myrcene. This chain is (-)-limonene synthase TPS1, chloroplastic, found in Cannabis sativa (Hemp).